The primary structure comprises 130 residues: Astrocytic phosphoprotein PEA-15 (130 aa).

One can recognise a DED domain in the interval 3-81; it reads EYGTLLQDLT…RPDLLTMVVD (79 aa). 2 positions are modified to phosphoserine: Ser-61 and Ser-90. The interval 98–107 is microtubule-binding; it reads KLTRIPSAKK. Residue Ser-104 is modified to Phosphoserine; by PKC. The residue at position 116 (Ser-116) is a Phosphoserine; by CaMK2. The segment at 122–129 is microtubule-binding; the sequence is KLAPPPKK.

As to quaternary structure, binds RPS6KA3, MAPK3 and MAPK1. Interacts with CASP8 and FADD. Transient interaction with PLD1 and PLD2. Post-translationally, phosphorylated by protein kinase C and calcium-calmodulin-dependent protein kinase. These phosphorylation events are modulated by neurotransmitters or hormones. In terms of tissue distribution, predominantly expressed in the brain. Low levels in some peripheral organs.

The protein resides in the cytoplasm. Functionally, blocks Ras-mediated inhibition of integrin activation and modulates the ERK MAP kinase cascade. Inhibits RPS6KA3 activities by retaining it in the cytoplasm. Inhibits both TNFRSF6- and TNFRSF1A-mediated CASP8 activity and apoptosis. Regulates glucose transport by controlling both the content of SLC2A1 glucose transporters on the plasma membrane and the insulin-dependent trafficking of SLC2A4 from the cell interior to the surface. The sequence is that of Astrocytic phosphoprotein PEA-15 (Pea15) from Mus musculus (Mouse).